The chain runs to 200 residues: Guanylyl cyclase-activating protein 2 (200 aa).

Residue Gly2 is the site of N-myristoyl glycine attachment. 4 EF-hand domains span residues 14 to 31, 53 to 88, 89 to 124, and 141 to 176; these read GEID…FVME, EASQ…VLRG, TLEH…IYQL, and TPEE…DKWV. Ca(2+)-binding residues include Asp66, Asn68, Asp70, Thr72, Glu77, Asp102, Asp104, Asn106, Cys108, Glu113, Asp154, Asn156, Asp158, Gln160, and Glu165.

Post-translationally, the N-terminus is blocked. As to expression, in the retina, it is expressed in cone and rod photoreceptor cells.

The protein localises to the cell membrane. The protein resides in the photoreceptor inner segment. Its subcellular location is the cell projection. It localises to the cilium. It is found in the photoreceptor outer segment. Stimulates two retinal guanylyl cyclases (GCs) GUCY2D and GUCY2F when free calcium ions concentration is low, and inhibits GUCY2D and GUCY2F when free calcium ions concentration is elevated. This Ca(2+)-sensitive regulation of GCs is a key event in recovery of the dark state of rod photoreceptors following light exposure. May be involved in cone photoreceptor response and recovery of response in bright light. This Homo sapiens (Human) protein is Guanylyl cyclase-activating protein 2 (GUCA1B).